The following is a 1136-amino-acid chain: Coiled-coil domain-containing protein 136 (1136 aa).

Residues 1 to 46 (MQAMDGEVLLPALYEEEEEEEEEEEEVEEEQVEKGGSLGSLSMGKH) are disordered. Acidic residues predominate over residues 14–31 (YEEEEEEEEEEEEVEEEQ). Serine 50 is subject to Phosphoserine. 2 coiled-coil regions span residues 293-631 (VMQL…QNQE) and 681-730 (LQAL…QTQS). Disordered stretches follow at residues 741 to 773 (GKNS…KSYV), 814 to 837 (GSVS…DPAE), 965 to 990 (NRPS…NGVR), and 1040 to 1111 (KKER…PDPP). Positions 743–752 (NSGSRAPSTE) are enriched in polar residues. Residues 839 to 972 (EDLEHFEETV…KENRPSISSE (134 aa)) adopt a coiled-coil conformation. Over residues 976 to 989 (KNVNKNMNKNANGV) the composition is skewed to low complexity. Residues 1017–1057 (YYKASQRRLDELMKEEKEIEEARKKEREKKAKKDLCKLATN) adopt a coiled-coil conformation. Residues 1040-1052 (KKEREKKAKKDLC) show a composition bias toward basic and acidic residues. Positions 1067–1091 (EPTEDEEENFEEYREGEDESCEAAE) are enriched in acidic residues. A helical membrane pass occupies residues 1112-1132 (IFSLPLVGLVVISALLWCWWA).

In terms of tissue distribution, present at high level in testis (at protein level).

Its subcellular location is the cytoplasmic vesicle. The protein localises to the secretory vesicle. The protein resides in the acrosome membrane. Functionally, may play a role in acrosome formation in spermatogenesis and in fertilization. This Mus musculus (Mouse) protein is Coiled-coil domain-containing protein 136 (Ccdc136).